The sequence spans 156 residues: Endogenous retrovirus group K member 6 Pro protein (156 aa).

The Peptidase A2 domain maps to 21–96 (FEGLVDTGAD…IPLNLWGRDL (76 aa)). Residue Asp26 is part of the active site. Positions 111–156 (YSPTSQKIMTKMGYIPGKGLGKNEDGIKIPVEAKINQEREGIGNPC) constitute a G-patch domain.

Belongs to the peptidase A2 family. HERV class-II K(HML-2) subfamily. Active as a homodimer. Post-translationally, autoproteolytically processed at the N-terminus. Expected C-terminal autoprocessing not detected. The sequence shown is that of the processed Pro protein.

It catalyses the reaction Processing at the authentic HIV-1 PR recognition site and release of the mature p17 matrix and the p24 capsid protein, as a result of the cleavage of the -SQNY-|-PIVQ- cleavage site.. Functionally, retroviral proteases have roles in the processing of the primary translation products and the maturation of the viral particle. Endogenous Pro proteins may have kept, lost or modified their original function during evolution. This chain is Endogenous retrovirus group K member 6 Pro protein (ERVK-6), found in Homo sapiens (Human).